The following is a 1354-amino-acid chain: Enhancer of mRNA-decapping protein 4 homolog (1354 aa).

Positions 18 to 38 (PLSASSSPPPSVHRSPRCGKA) are disordered. A Phosphoserine modification is found at Ser-32. WD repeat units lie at residues 309-348 (EEDS…VRNH) and 363-406 (CSLF…CLQT). A disordered region spans residues 552–581 (ERSSLNSKRSQTPEDNLLIKEEPESPNSGT). Polar residues predominate over residues 554-565 (SSLNSKRSQTPE). Ser-561 bears the Phosphoserine mark. The residue at position 563 (Thr-563) is a Phosphothreonine. Ser-576 bears the Phosphoserine mark. Phosphothreonine is present on Thr-581. Ser-759, Ser-762, and Ser-763 each carry phosphoserine. The stretch at 765–803 (SREVQEIMATQDDADAYEAELENLDDDDDDEEEELANSS) forms a coiled coil. The span at 788 to 799 (LDDDDDDEEEEL) shows a compositional bias: acidic residues. Disordered regions lie at residues 788-811 (LDDD…AVDG) and 838-884 (NTNN…AGGT). The span at 853–884 (NNNTSVGSNSNNNTATTLSTSNTSSSNNAGGT) shows a compositional bias: low complexity. Coiled coils occupy residues 893 to 936 (ELNA…HSKQ), 969 to 1036 (NEHK…QAQM), and 1159 to 1188 (KHRT…QVQE). Phosphoserine is present on Ser-1207. Thr-1211 and Thr-1317 each carry phosphothreonine. Tyr-1320 is modified (phosphotyrosine).

This sequence belongs to the WD repeat EDC4 family. As to quaternary structure, homodimer. Interacts with Dcp1 and Dcp2. Interacts with Gyf.

The protein localises to the cytoplasm. It is found in the P-body. In terms of biological role, in the process of mRNA degradation, seems to play a role in mRNA decapping. Required for silencing a subset of endogenous miRNA targets. The polypeptide is Enhancer of mRNA-decapping protein 4 homolog (Ge-1) (Drosophila melanogaster (Fruit fly)).